A 503-amino-acid chain; its full sequence is Cobyric acid synthase (503 aa).

The GATase cobBQ-type domain maps to 251–450 (DLDIAVIRLP…IHGIFENAAF (200 aa)). Cys-331 serves as the catalytic Nucleophile. The active site involves His-442.

The protein belongs to the CobB/CobQ family. CobQ subfamily.

The protein operates within cofactor biosynthesis; adenosylcobalamin biosynthesis. Catalyzes amidations at positions B, D, E, and G on adenosylcobyrinic A,C-diamide. NH(2) groups are provided by glutamine, and one molecule of ATP is hydrogenolyzed for each amidation. The chain is Cobyric acid synthase from Dehalococcoides mccartyi (strain ATCC BAA-2100 / JCM 16839 / KCTC 5957 / BAV1).